The primary structure comprises 361 residues: S-adenosylmethionine decarboxylase proenzyme (361 aa).

Catalysis depends on residues E8 and E11. S68 acts as the Schiff-base intermediate with substrate; via pyruvic acid in catalysis. At S68 the chain carries Pyruvic acid (Ser); by autocatalysis. Catalysis depends on C82, which acts as the Proton donor; for catalytic activity. Residues S234 and H247 each act as proton acceptor; for processing activity in the active site. The tract at residues 341-361 (SCGSPRSTLHRCWSETENEEE) is disordered.

It belongs to the eukaryotic AdoMetDC family. It depends on pyruvate as a cofactor. Post-translationally, is synthesized initially as an inactive proenzyme. Formation of the active enzyme involves a self-maturation process in which the active site pyruvoyl group is generated from an internal serine residue via an autocatalytic post-translational modification. Two non-identical subunits are generated from the proenzyme in this reaction, and the pyruvate is formed at the N-terminus of the alpha chain, which is derived from the carboxyl end of the proenzyme. The post-translation cleavage follows an unusual pathway, termed non-hydrolytic serinolysis, in which the side chain hydroxyl group of the serine supplies its oxygen atom to form the C-terminus of the beta chain, while the remainder of the serine residue undergoes an oxidative deamination to produce ammonia and the pyruvoyl group blocking the N-terminus of the alpha chain.

It catalyses the reaction S-adenosyl-L-methionine + H(+) = S-adenosyl 3-(methylsulfanyl)propylamine + CO2. The protein operates within amine and polyamine biosynthesis; S-adenosylmethioninamine biosynthesis; S-adenosylmethioninamine from S-adenosyl-L-methionine: step 1/1. In Helianthus annuus (Common sunflower), this protein is S-adenosylmethionine decarboxylase proenzyme (SAMDC).